A 493-amino-acid polypeptide reads, in one-letter code: Probable malate:quinone oxidoreductase (493 aa).

Belongs to the MQO family. FAD serves as cofactor.

The catalysed reaction is (S)-malate + a quinone = a quinol + oxaloacetate. It functions in the pathway carbohydrate metabolism; tricarboxylic acid cycle; oxaloacetate from (S)-malate (quinone route): step 1/1. The protein is Probable malate:quinone oxidoreductase of Lysinibacillus sphaericus (strain C3-41).